The chain runs to 150 residues: MALKSLVVLPLLVLVLLLVRVQPSLGKESAAAKFERQHMDSGNSPSSSSNYCNLMMCCRKMTQGKCKPVNTFVHESLADVKAVCSQKKVTCKNGQTNCYQSKSTMRITDCRETGSSKYPNCAYKTTQVEKHIIVACGGKPSVPVHFDASV.

The signal sequence occupies residues 1–26; it reads MALKSLVVLPLLVLVLLLVRVQPSLG. Substrate contacts are provided by Lys-33 and Arg-36. His-38 serves as the catalytic Proton acceptor. 4 disulfide bridges follow: Cys-52-Cys-110, Cys-66-Cys-121, Cys-84-Cys-136, and Cys-91-Cys-98. Residues 67–71 and Lys-92 each bind substrate; that span reads KPVNT. Deamidated asparagine; by deterioration is present on Asn-93. Position 111 (Arg-111) interacts with substrate. His-145 serves as the catalytic Proton donor.

The protein belongs to the pancreatic ribonuclease family. Homodimer; disulfide-linked. In terms of tissue distribution, seminal plasma. Can reach 3% of the protein content of this fluid.

The protein resides in the secreted. The catalysed reaction is an [RNA] containing cytidine + H2O = an [RNA]-3'-cytidine-3'-phosphate + a 5'-hydroxy-ribonucleotide-3'-[RNA].. The enzyme catalyses an [RNA] containing uridine + H2O = an [RNA]-3'-uridine-3'-phosphate + a 5'-hydroxy-ribonucleotide-3'-[RNA].. Its activity is regulated as follows. Allosteric regulation by both substrate and reaction products. In terms of biological role, this enzyme hydrolyzes both single- and double-stranded RNA. This is Seminal ribonuclease (SRN) from Bos taurus (Bovine).